Consider the following 248-residue polypeptide: 3-deoxy-manno-octulosonate cytidylyltransferase (248 aa).

Belongs to the KdsB family.

The protein resides in the cytoplasm. The catalysed reaction is 3-deoxy-alpha-D-manno-oct-2-ulosonate + CTP = CMP-3-deoxy-beta-D-manno-octulosonate + diphosphate. Its pathway is nucleotide-sugar biosynthesis; CMP-3-deoxy-D-manno-octulosonate biosynthesis; CMP-3-deoxy-D-manno-octulosonate from 3-deoxy-D-manno-octulosonate and CTP: step 1/1. It functions in the pathway bacterial outer membrane biogenesis; lipopolysaccharide biosynthesis. Activates KDO (a required 8-carbon sugar) for incorporation into bacterial lipopolysaccharide in Gram-negative bacteria. The protein is 3-deoxy-manno-octulosonate cytidylyltransferase of Shigella boydii serotype 18 (strain CDC 3083-94 / BS512).